The following is a 144-amino-acid chain: Maximins 4/H3 type 1 (144 aa).

The N-terminal stretch at 1–18 is a signal peptide; the sequence is MNFKYIIAVSFFIASAYA. A propeptide spanning residues 19–43 is cleaved from the precursor; the sequence is RSEEKDVQSLSQRDVLEEESLREIR. N70 is subject to Asparagine amide. Residues 74 to 123 constitute a propeptide that is removed on maturation; the sequence is TAEDHEVMKRLEAVMRDLDSLDHPEEASERETRGFNQEEIANLFTKKEKR. I143 bears the Isoleucine amide mark.

Belongs to the bombinin family. Expressed by the skin glands.

It localises to the secreted. Functionally, maximin-4 shows antibacterial activity against both Gram-positive and Gram-negative bacteria. It also shows antimicrobial activity against the fungus C.albicans, but not against A.flavus nor P.uticale. It has little hemolytic activity. It does not possess a significant cytotoxicity against tumor cell lines. It does not possess a significant anti-HIV activity. Its function is as follows. Maximin-H3 shows antibacterial activity against both Gram-positive and Gram-negative bacteria. It also shows antimicrobial activity against the fungus C.albicans. Shows strong hemolytic activity. This chain is Maximins 4/H3 type 1, found in Bombina maxima (Giant fire-bellied toad).